The sequence spans 357 residues: Glutamate 5-kinase (357 aa).

Lys-7 lines the ATP pocket. Substrate contacts are provided by Ser-43, Asp-130, and Asn-142. ATP-binding positions include 162 to 163 (TD) and 205 to 211 (TGGMTTK). Positions 270-341 (EGELCLDQGA…QALSVVTDAE (72 aa)) constitute a PUA domain.

The protein belongs to the glutamate 5-kinase family.

It is found in the cytoplasm. The enzyme catalyses L-glutamate + ATP = L-glutamyl 5-phosphate + ADP. It participates in amino-acid biosynthesis; L-proline biosynthesis; L-glutamate 5-semialdehyde from L-glutamate: step 1/2. Its function is as follows. Catalyzes the transfer of a phosphate group to glutamate to form L-glutamate 5-phosphate. The chain is Glutamate 5-kinase from Synechococcus sp. (strain CC9902).